The primary structure comprises 391 residues: Recombination and repair protein (391 aa).

60 to 67 (GPSKSFKS) provides a ligand contact to ATP. Positions 364-374 (KSPESKSKSAA) are enriched in basic and acidic residues. The disordered stretch occupies residues 364–391 (KSPESKSKSAADLETDLEQLSDMEEFNE). Over residues 376–391 (LETDLEQLSDMEEFNE) the composition is skewed to acidic residues.

It belongs to the RecA family.

Its function is as follows. Important in genetic recombination, DNA repair, and replication. Possesses pairing and strand-transfer activity. Interacts with dda and gene 32 proteins. The polypeptide is Recombination and repair protein (UVSX) (Enterobacteria phage T4 (Bacteriophage T4)).